A 398-amino-acid polypeptide reads, in one-letter code: Phosphoglycerate kinase (398 aa).

Substrate is bound by residues 21–23 (DFN), arginine 36, 59–62 (HLGR), arginine 119, and arginine 157. ATP-binding positions include lysine 208, glycine 296, glutamate 327, and 354–357 (GGDS).

The protein belongs to the phosphoglycerate kinase family. Monomer.

Its subcellular location is the cytoplasm. It carries out the reaction (2R)-3-phosphoglycerate + ATP = (2R)-3-phospho-glyceroyl phosphate + ADP. The protein operates within carbohydrate degradation; glycolysis; pyruvate from D-glyceraldehyde 3-phosphate: step 2/5. In Streptococcus pyogenes serotype M18 (strain MGAS8232), this protein is Phosphoglycerate kinase.